The sequence spans 369 residues: Ribosomal RNA large subunit methyltransferase G (369 aa).

Belongs to the methyltransferase superfamily. RlmG family.

It localises to the cytoplasm. It carries out the reaction guanosine(1835) in 23S rRNA + S-adenosyl-L-methionine = N(2)-methylguanosine(1835) in 23S rRNA + S-adenosyl-L-homocysteine + H(+). In terms of biological role, specifically methylates the guanine in position 1835 (m2G1835) of 23S rRNA. The chain is Ribosomal RNA large subunit methyltransferase G from Magnetococcus marinus (strain ATCC BAA-1437 / JCM 17883 / MC-1).